Here is a 693-residue protein sequence, read N- to C-terminus: Sister chromatid cohesion 1 protein 3 (693 aa).

Disordered regions lie at residues 167–250 (IPMD…PGTV), 262–361 (DLSP…KNFD), 460–511 (PVSP…TFDN), and 545–573 (TQSG…GQRN). Composition is skewed to basic and acidic residues over residues 178-201 (VSRH…EPRD) and 232-243 (TEERIPNSERND). A compositionally biased stretch (polar residues) spans 264–277 (SPTSHPSFAAQQQD). Positions 278–295 (VRVERTESLDETLNEKEP) are enriched in basic and acidic residues. The span at 316–325 (RSGSPGSAAG) shows a compositional bias: low complexity. Composition is skewed to polar residues over residues 465–483 (PDST…QQTE) and 545–564 (TQSG…TSTV).

Belongs to the rad21 family. As to quaternary structure, component of the cohesin complex. As to expression, low expression in shoots, buds, siliques, leaves and roots. Found in, but not limited to, actively dividing cells: in procambium, protoderm and ground meristem in roots, and in shoot and floral meristems.

It localises to the nucleus. Its function is as follows. May be involved in sister chromatid cohesion during mitosis. The polypeptide is Sister chromatid cohesion 1 protein 3 (SYN3) (Arabidopsis thaliana (Mouse-ear cress)).